We begin with the raw amino-acid sequence, 552 residues long: MHCERFLCILRIIGTTLFGVSLLLGITAAYIVGYQFIQTDNYYFSFGLYGAFLASHLIIQSLFAFLEHRKMKKSLETPIKLNKTVALCIAAYQEDPDYLRKCLQSVKRLTYPGIKVVMVIDGNSEDDLYMMDIFSEVMGRDKSATYIWKNNYHVKGPGETDESHKESSQHVTQLVLSNKSICTMQKWGGKREVMYTAFRALGRSVDYVQVCDSDTMLDPASSVEMVKVLEEDPMVGGVGGDVQILNKYDSWISFLSSVRYWMAFNIERACQSYFGCVQCISGPLGMYRNSLLHEFVEDWYNQEFMGSQCSFGDDRHLTNRVLSLGYATKYTARSKCLTETPIEYLRWLNQQTRWSKSYFREWLYNAMWFHKHHLWMTYEAVITGFFPFFLIATVIQLFYRGKIWNTLLFLLTVQLVGLIKSSFASCLRGNIVMVFMSLYSVLYMSSLLPAKMFAIATINKAGWGTSGRKTIVVNFIGLIPVSVWFTILLGGVIFTIYKESKKPFSESKQTVLIVGTLLYACYWVMLLTLYVVLINKCGRRKKGQQYDMVLDV.

The Cytoplasmic segment spans residues 1–11 (MHCERFLCILR). A helical transmembrane segment spans residues 12–32 (IIGTTLFGVSLLLGITAAYIV). Over 33–45 (GYQFIQTDNYYFS) the chain is Extracellular. A helical membrane pass occupies residues 46-66 (FGLYGAFLASHLIIQSLFAFL). Over 67–374 (EHRKMKKSLE…NAMWFHKHHL (308 aa)) the chain is Cytoplasmic. The residue at position 110 (threonine 110) is a Phosphothreonine. A Glycyl lysine isopeptide (Lys-Gly) (interchain with G-Cter in ubiquitin) cross-link involves residue lysine 190. Serine 221 carries O-linked (GlcNAc) serine glycosylation. The residue at position 328 (threonine 328) is a Phosphothreonine. Residues 375–395 (WMTYEAVITGFFPFFLIATVI) traverse the membrane as a helical segment. At 396–402 (QLFYRGK) the chain is on the extracellular side. A helical membrane pass occupies residues 403–423 (IWNTLLFLLTVQLVGLIKSSF). Topologically, residues 424–429 (ASCLRG) are cytoplasmic. The helical transmembrane segment at 430-450 (NIVMVFMSLYSVLYMSSLLPA) threads the bilayer. Over 451 to 475 (KMFAIATINKAGWGTSGRKTIVVNF) the chain is Extracellular. The helical transmembrane segment at 476–496 (IGLIPVSVWFTILLGGVIFTI) threads the bilayer. The Cytoplasmic portion of the chain corresponds to 497–510 (YKESKKPFSESKQT). A helical membrane pass occupies residues 511–531 (VLIVGTLLYACYWVMLLTLYV). Over 532 to 552 (VLINKCGRRKKGQQYDMVLDV) the chain is Extracellular.

Belongs to the NodC/HAS family. In terms of assembly, homodimer; dimerization promotes enzymatic activity. Forms heterodimer with HAS3. Forms heterodimer with HAS1. Mg(2+) is required as a cofactor. Post-translationally, phosphorylation at Thr-328 is essential for hyaluronan synthase activity. O-GlcNAcylation at Ser-221 increases the stability of HAS2 and plasma membrane localization. In terms of processing, ubiquitination at Lys-190; this ubiquitination is essential for hyaluronan synthase activity and homo- or hetero-oligomerization. Can also be poly-ubiquitinated. Deubiquitinated by USP17 and USP4. USP17 efficiently removes 'Lys-63'- and 'Lys-48'-linked polyubiquitin chains, whereas USP4 preferentially removes monoubiquitination and, partially, both 'Lys-63'- and 'Lys-48'-linked polyubiquitin chain. In terms of tissue distribution, expressed in corneal endothelial cells.

Its subcellular location is the cell membrane. The protein resides in the endoplasmic reticulum membrane. It localises to the vesicle. The protein localises to the golgi apparatus membrane. It is found in the lysosome. It carries out the reaction [hyaluronan](n) + UDP-N-acetyl-alpha-D-glucosamine = N-acetyl-beta-D-glucosaminyl-(1-&gt;4)-[hyaluronan](n) + UDP + H(+). The enzyme catalyses N-acetyl-beta-D-glucosaminyl-(1-&gt;4)-[hyaluronan](n) + UDP-alpha-D-glucuronate = [hyaluronan](n+1) + UDP + H(+). The protein operates within glycan biosynthesis; hyaluronan biosynthesis. Functionally, catalyzes the addition of GlcNAc or GlcUA monosaccharides to the nascent hyaluronan polymer. Therefore, it is essential to hyaluronan synthesis a major component of most extracellular matrices that has a structural role in tissues architectures and regulates cell adhesion, migration and differentiation. This is one of three isoenzymes responsible for cellular hyaluronan synthesis and it is particularly responsible for the synthesis of high molecular mass hyaluronan. This is Hyaluronan synthase 2 (HAS2) from Bos taurus (Bovine).